We begin with the raw amino-acid sequence, 204 residues long: Vacuolar protein-sorting-associated protein 46 (204 aa).

Residues 1–103 form an interaction with VSP24 region; sequence MSRNSAAGLE…ASMGQVCKGM (103 aa). Ser-5 is subject to Phosphoserine. Coiled coils occupy residues 9 to 56 and 109 to 129; these read LENT…RIYA and NMNL…FEDL. Residues 104–204 form an interaction with VSP4 region; it reads DKALQNMNLQ…LAQRLRALRG (101 aa). Residues 176–204 are interaction with VTA1; the sequence is NVPEIKAKEVNVDDEKEDKLAQRLRALRG. Positions 185–196 are enriched in basic and acidic residues; it reads VNVDDEKEDKLA. The disordered stretch occupies residues 185–204; that stretch reads VNVDDEKEDKLAQRLRALRG.

The protein belongs to the SNF7 family. Self-associates. Interacts with VPS4 and VTA1. Interacts with IST1.

The protein localises to the endosome membrane. It is found in the endomembrane system. Functionally, class E VPS protein implicated in concentration and sorting of cargo proteins of the multivesicular body (MVB) for incorporation into intralumenal vesicles. The lumenal sequestrated membrane proteins will be targeted into the vacuole after fusion of the endosome with the vacuole. Probably acts as a peripherally associated component of the ESCRT-III complex, which appears to be critical for late steps in MVB sorting, such as membrane invagination and final cargo sorting and recruits late-acting components of the sorting machinery. The MVB pathway requires the sequential function of ESCRT-O, -I,-II and -III complex assemblies. Regulates the membrane association of VPS4. Can stimulate VPS4 ATPase activity directly or via VTA1. The chain is Vacuolar protein-sorting-associated protein 46 (DID2) from Saccharomyces cerevisiae (strain ATCC 204508 / S288c) (Baker's yeast).